We begin with the raw amino-acid sequence, 302 residues long: Cardiolipin synthase (CMP-forming) (302 aa).

The tract at residues 65–84 (PRTHCSGAGKAAPEPAAGGD) is disordered. Positions 71 to 84 (GAGKAAPEPAAGGD) are enriched in low complexity. A run of 5 helical transmembrane segments spans residues 109 to 129 (IPNLLSMTRIGLAPVLGYLIL), 133 to 153 (FNVALGVFALAGLTDLLDGFI), 190 to 212 (IPVPLTYMIISRDVMLIAAVFYV), 250 to 270 (LILVAASLAAPVFNYADSIYL), and 271 to 289 (QILWCCTAFTTAASAYSYY).

This sequence belongs to the CDP-alcohol phosphatidyltransferase class-I family. A divalent metal cation serves as cofactor.

Its subcellular location is the mitochondrion inner membrane. The catalysed reaction is a CDP-1,2-diacyl-sn-glycerol + a 1,2-diacyl-sn-glycero-3-phospho-(1'-sn-glycerol) = a cardiolipin + CMP + H(+). Catalyzes the synthesis of cardiolipin (CL) (diphosphatidylglycerol) by specifically transferring a phosphatidyl group from CDP-diacylglycerol to phosphatidylglycerol (PG). CL is a key phospholipid in mitochondrial membranes and plays important roles in maintaining the functional integrity and dynamics of mitochondria under both optimal and stress conditions. This chain is Cardiolipin synthase (CMP-forming) (Crls1), found in Rattus norvegicus (Rat).